Here is a 247-residue protein sequence, read N- to C-terminus: Calpain small subunit 2 (247 aa).

12 residues coordinate Ca(2+): alanine 88, aspartate 91, glutamate 93, aspartate 131, aspartate 133, threonine 135, lysine 137, glutamate 142, aspartate 161, aspartate 163, serine 165, and aspartate 204. 4 EF-hand domains span residues 118–151, 148–183, 184–212, and 213–247; these read FSLD…NNIK, NNIK…AGFQ, LNEQ…ISCL, and VRLD…TMYS.

As to quaternary structure, heterodimer of a large (catalytic) and a small (regulatory) subunit.

The protein localises to the cytoplasm. The protein resides in the cell membrane. Calcium-regulated non-lysosomal thiol-protease which catalyzes limited proteolysis of substrates involved in cytoskeletal remodeling and signal transduction. This small subunit may act as a tissue-specific chaperone of the large subunit, possibly by helping it fold into its correct conformation for activity. The sequence is that of Calpain small subunit 2 (Capns2) from Mus musculus (Mouse).